We begin with the raw amino-acid sequence, 84 residues long: Beta/gamma-crystallin (84 aa).

Beta/gamma crystallin 'Greek key' domains are found at residues 2–42 (GKII…IVES) and 43–84 (GTWF…VKQQ). The segment at 64–84 (KYPNPGSWGGNDDELSSVKQQ) is disordered.

Belongs to the beta/gamma-crystallin family. In terms of assembly, monomer. Palps of larvae and otolith of the light-sensing ocellus.

Its function is as follows. Structural component of the neuroectodermal visual system. This is Beta/gamma-crystallin from Ciona intestinalis (Transparent sea squirt).